Reading from the N-terminus, the 70-residue chain is Small ribosomal subunit protein bS21B (70 aa).

It belongs to the bacterial ribosomal protein bS21 family.

This chain is Small ribosomal subunit protein bS21B (rpsU2), found in Rhizobium meliloti (strain 1021) (Ensifer meliloti).